A 1004-amino-acid polypeptide reads, in one-letter code: Kinesin-like protein KIN-14R (1004 aa).

3 disordered regions span residues Met-1–Asp-21, Pro-61–Asp-90, and Glu-110–Gly-169. Over residues Val-63 to Asn-75 the composition is skewed to acidic residues. Residues Pro-115–Ser-125 show a composition bias toward pro residues. 2 coiled-coil regions span residues Cys-189–Ser-230 and Leu-266–Lys-338. The region spanning Asn-345–Ile-671 is the Kinesin motor domain. Position 428 to 435 (Gly-428 to Thr-435) interacts with ATP. The stretch at Met-691–Leu-742 forms a coiled coil. 2 disordered regions span residues Asp-759–Glu-791 and Ser-946–Asn-1004. Residues Arg-948–Thr-958 show a composition bias toward low complexity. Over residues Asn-995–Asn-1004 the composition is skewed to polar residues.

Belongs to the TRAFAC class myosin-kinesin ATPase superfamily. Kinesin family. KIN-14 subfamily.

This is Kinesin-like protein KIN-14R from Oryza sativa subsp. japonica (Rice).